Reading from the N-terminus, the 538-residue chain is Phosphoenolpyruvate carboxykinase (ATP) (538 aa).

3 residues coordinate substrate: R64, Y205, and K211. ATP is bound by residues K211, H230, and 246–254; that span reads GLSGTGKTT. 2 residues coordinate Mn(2+): K211 and H230. Mn(2+) is bound at residue D267. Residues E295, R331, 447–448, and T453 each bind ATP; that span reads RI. R331 contacts substrate.

The protein belongs to the phosphoenolpyruvate carboxykinase (ATP) family. In terms of assembly, monomer. It depends on Mn(2+) as a cofactor.

It is found in the cytoplasm. The catalysed reaction is oxaloacetate + ATP = phosphoenolpyruvate + ADP + CO2. Its pathway is carbohydrate biosynthesis; gluconeogenesis. In terms of biological role, involved in the gluconeogenesis. Catalyzes the conversion of oxaloacetate (OAA) to phosphoenolpyruvate (PEP) through direct phosphoryl transfer between the nucleoside triphosphate and OAA. This is Phosphoenolpyruvate carboxykinase (ATP) from Baumannia cicadellinicola subsp. Homalodisca coagulata.